An 88-amino-acid polypeptide reads, in one-letter code: Kunitz-type U15-theraphotoxin-Hhn1n (88 aa).

Positions 1–27 (MGIARILSAVLFLSVLFVVTFPTLLSA) are cleaved as a signal peptide. Positions 28-33 (DHHDGR) are excised as a propeptide. One can recognise a BPTI/Kunitz inhibitor domain in the interval 37-85 (CRLPSDRGGCKASFERWYFNGTTCTKFVYGGYGGNDNRFPTEKACMKRC). Cystine bridges form between cysteine 37–cysteine 85 and cysteine 60–cysteine 81.

Belongs to the venom Kunitz-type family. 01 (intermediate) subfamily. In terms of tissue distribution, expressed by the venom gland.

Its subcellular location is the secreted. Its function is as follows. Serine protease inhibitor that inhibits trypsin at a molar ratio of 1:1. This chain is Kunitz-type U15-theraphotoxin-Hhn1n, found in Cyriopagopus hainanus (Chinese bird spider).